The primary structure comprises 358 residues: Replication-associated protein (358 aa).

The CRESS-DNA virus Rep endonuclease domain occupies 7 to 115; sequence RVQAKNVFLT…DGDTVEWGQF (109 aa). The RCR-1 motif lies at 14 to 17; that stretch reads FLTY. Glutamate 48, histidine 56, and histidine 58 together coordinate a divalent metal cation. An RCR-2 motif is present at residues 56 to 58; that stretch reads HLH. Tyrosine 102 serves as the catalytic For DNA cleavage activity. The short motif at 102–105 is the RCR-3 element; that stretch reads YLDK. Aspartate 106 lines the a divalent metal cation pocket. The segment at 142–152 is binding to RBR1; that stretch reads KSEALNVIREL. Residues 155 to 175 are oligomerization; the sequence is KDFVLQFHNLNSNLDRIFQEP. An ATP-binding site is contributed by 220 to 227; that stretch reads GDSRTGKT.

Belongs to the geminiviridae Rep protein family. Homooligomer. Interacts with the replication enhancer protein (REn). Interacts with host retinoblastoma-related protein 1 (RBR1), and may thereby induce the transcription of host replicative enzymes even if the cell is not dividing anymore. Interacts with host PCNA. Interacts with host SCE1 protein. It depends on Mg(2+) as a cofactor. Requires Mn(2+) as cofactor.

It is found in the host nucleus. Essential for the replication of viral ssDNA. The closed circular ssDNA genome is first converted to a superhelical dsDNA. Rep binds a specific region at the genome origin of replication. It introduces an endonucleolytic nick within the conserved sequence 5'-TAATATTAC-3' in the intergenic region of the genome present in all geminiviruses, thereby initiating the rolling circle replication (RCR). Following cleavage, binds covalently to the 5'-phosphate of DNA as a tyrosyl ester. The cleavage gives rise to a free 3'-OH that serves as a primer for the cellular DNA polymerase. The polymerase synthesizes the (+) strand DNA by rolling circle mechanism. After one round of replication, a Rep-catalyzed nucleotidyl transfer reaction releases a circular single-stranded virus genome, thereby terminating the replication. Displays origin-specific DNA cleavage, nucleotidyl transferase, ATPase and helicase activities. The polypeptide is Replication-associated protein (Hewittia sublobata (Coralbush)).